The sequence spans 107 residues: Large ribosomal subunit protein uL24 (107 aa).

The protein belongs to the universal ribosomal protein uL24 family. In terms of assembly, part of the 50S ribosomal subunit.

In terms of biological role, one of two assembly initiator proteins, it binds directly to the 5'-end of the 23S rRNA, where it nucleates assembly of the 50S subunit. Its function is as follows. One of the proteins that surrounds the polypeptide exit tunnel on the outside of the subunit. The chain is Large ribosomal subunit protein uL24 from Pelotomaculum thermopropionicum (strain DSM 13744 / JCM 10971 / SI).